Here is a 412-residue protein sequence, read N- to C-terminus: Transcription factor NIGT1 (412 aa).

3 disordered regions span residues 54 to 241 (MDAA…RCWA), 286 to 310 (KYRL…PAPP), and 358 to 412 (AMLP…TTSA). The span at 90 to 112 (ESTHADAAKSGKKEEAETSERHS) shows a compositional bias: basic and acidic residues. Positions 183-193 (ASSTTAAASST) are enriched in low complexity. Positions 198-228 (SGDKPTDDDTEKHMETDKDNDKDAKDKDKEG) are enriched in basic and acidic residues. Positions 232–292 (PHRKPRRCWA…HLQKYRLHTR (61 aa)) constitute an HTH myb-type domain. Residues 263–288 (PKQIRELMKVDGLTNDEVKSHLQKYR) constitute a DNA-binding region (H-T-H motif). The span at 383–392 (SGSEGRRSGD) shows a compositional bias: basic and acidic residues. A compositionally biased stretch (low complexity) spans 395–412 (DGSSSSPAVSSSSQTTSA).

The protein resides in the nucleus. In terms of biological role, transcriptional repressor that may play a role in response to nitrogen. May be involved in a time-dependent signaling for transcriptional regulation of nitrate-responsive genes. Binds specifically to the DNA sequence motif 5'-GAATC-3' or 5'-GAATATTC-3'. Represses the activity of its own promoter trough binding to these motifs. The protein is Transcription factor NIGT1 of Oryza sativa subsp. japonica (Rice).